The primary structure comprises 206 residues: Pyridoxine/pyridoxamine 5'-phosphate oxidase (206 aa).

FMN contacts are provided by residues 53–58 (RMVLLK), 68–69 (YT), Lys-75, and Gln-97. Residue Lys-58 participates in substrate binding. Substrate-binding residues include Tyr-115, Arg-119, and Ser-123. FMN is bound by residues 132–133 (QS) and Trp-177. 183 to 185 (RLH) provides a ligand contact to substrate. Arg-187 provides a ligand contact to FMN.

The protein belongs to the pyridoxamine 5'-phosphate oxidase family. Homodimer. FMN is required as a cofactor.

The enzyme catalyses pyridoxamine 5'-phosphate + O2 + H2O = pyridoxal 5'-phosphate + H2O2 + NH4(+). It carries out the reaction pyridoxine 5'-phosphate + O2 = pyridoxal 5'-phosphate + H2O2. It participates in cofactor metabolism; pyridoxal 5'-phosphate salvage; pyridoxal 5'-phosphate from pyridoxamine 5'-phosphate: step 1/1. It functions in the pathway cofactor metabolism; pyridoxal 5'-phosphate salvage; pyridoxal 5'-phosphate from pyridoxine 5'-phosphate: step 1/1. Catalyzes the oxidation of either pyridoxine 5'-phosphate (PNP) or pyridoxamine 5'-phosphate (PMP) into pyridoxal 5'-phosphate (PLP). In Sinorhizobium fredii (strain NBRC 101917 / NGR234), this protein is Pyridoxine/pyridoxamine 5'-phosphate oxidase.